Here is a 361-residue protein sequence, read N- to C-terminus: Trehalose 6-phosphate phosphatase RA3 (361 aa).

The protein belongs to the trehalose phosphatase family. Requires a divalent metal cation as cofactor. In terms of tissue distribution, expressed in axillary inflorescence meristems.

It carries out the reaction alpha,alpha-trehalose 6-phosphate + H2O = alpha,alpha-trehalose + phosphate. It participates in glycan biosynthesis; trehalose biosynthesis. In terms of biological role, removes the phosphate from trehalose 6-phosphate to produce free trehalose. Is specific for trehalose 6-phosphate. Does not possess activity toward glucose, sucrose or fructose 6-phosphates. Regulates inflorescence branching. Required to establish the correct identity and determinacy of axillary meristems in both male and female inflorescences. May act through a sugar signal that moves into axillary meristems. Acts upstream of RA1. May have a transcriptional regulatory function. The polypeptide is Trehalose 6-phosphate phosphatase RA3 (Zea mays (Maize)).